The following is a 286-amino-acid chain: Puff II/9-1 protein (286 aa).

An N-terminal signal peptide occupies residues 1–19 (MKQFIVLTVVLLAIQELQG). Residues 61–235 (ITAIKKDNDF…ENALNTLRCE (175 aa)) are helical. An N-linked (GlcNAc...) asparagine glycan is attached at Asn156.

The polypeptide is Puff II/9-1 protein (II/9-1) (Bradysia coprophila (Dark-winged fungus gnat)).